The primary structure comprises 113 residues: MPDYLVVLQAAWIVRKARSVEDAMNIAVAEAGKKLNPDLDFVKIDVGDTACPKCNSPLKAVFMVAGVALVGLIFEMKVFNAKSPEHAAKIAKYEIGKRMPRIPLEVIEVAEIE.

This sequence belongs to the UPF0212 family.

This Archaeoglobus fulgidus (strain ATCC 49558 / DSM 4304 / JCM 9628 / NBRC 100126 / VC-16) protein is UPF0212 protein AF_0282.